The following is a 132-amino-acid chain: MHILDSLLAFSAYFFIGVAMVIIFLFIYSKITPHNEWQLIKNNNTAASLAFSGTLLGYVIPLSSAAINAVSIPDYFAWGGIALVIQLLVFAGVRLYMPALSEKIINHNTAAGMFMGTAALAGGIFNAACMTW.

Residues 1 to 6 (MHILDS) are Periplasmic-facing. The chain crosses the membrane as a helical span at residues 7-27 (LLAFSAYFFIGVAMVIIFLFI). The Cytoplasmic segment spans residues 28–46 (YSKITPHNEWQLIKNNNTA). The chain crosses the membrane as a helical span at residues 47–67 (ASLAFSGTLLGYVIPLSSAAI). The Periplasmic portion of the chain corresponds to 68–71 (NAVS). The chain crosses the membrane as a helical span at residues 72–92 (IPDYFAWGGIALVIQLLVFAG). Over 93-109 (VRLYMPALSEKIINHNT) the chain is Cytoplasmic. A helical membrane pass occupies residues 110–130 (AAGMFMGTAALAGGIFNAACM). Residues 131–132 (TW) lie on the Periplasmic side of the membrane.

The protein belongs to the UPF0719 family.

It is found in the cell inner membrane. The chain is UPF0719 inner membrane protein YjfL (yjfL) from Escherichia coli O157:H7.